The primary structure comprises 310 residues: Translocator protein BipD (310 aa).

Coiled-coil stretches lie at residues Asp127–Tyr171 and Asp250–Thr299.

Belongs to the invasin protein D family.

The protein localises to the secreted. Functionally, required for invasion of epithelial cells, as well as for survival within host cells, escape from endocytic vesicles and subsequent actin-tail formation. Probably regulates the secretion of effectors BipB and BipC and their final integration into the target cell membrane. In Burkholderia pseudomallei (strain 1106a), this protein is Translocator protein BipD (bipD).